We begin with the raw amino-acid sequence, 547 residues long: Chaperonin GroEL (547 aa).

Residues 30 to 33, Lys-51, 87 to 91, Gly-415, and Asp-495 each bind ATP; these read TLGP and DGTTT.

This sequence belongs to the chaperonin (HSP60) family. Forms a cylinder of 14 subunits composed of two heptameric rings stacked back-to-back. Interacts with the co-chaperonin GroES.

It is found in the cytoplasm. It carries out the reaction ATP + H2O + a folded polypeptide = ADP + phosphate + an unfolded polypeptide.. Its function is as follows. Together with its co-chaperonin GroES, plays an essential role in assisting protein folding. The GroEL-GroES system forms a nano-cage that allows encapsulation of the non-native substrate proteins and provides a physical environment optimized to promote and accelerate protein folding. The chain is Chaperonin GroEL from Shewanella halifaxensis (strain HAW-EB4).